The chain runs to 265 residues: tRNA pseudouridine synthase A (265 aa).

Residue D52 is the Nucleophile of the active site. A substrate-binding site is contributed by Y105.

The protein belongs to the tRNA pseudouridine synthase TruA family.

It carries out the reaction uridine(38/39/40) in tRNA = pseudouridine(38/39/40) in tRNA. In terms of biological role, formation of pseudouridine at positions 38, 39 and 40 in the anticodon stem and loop of transfer RNAs. This chain is tRNA pseudouridine synthase A, found in Archaeoglobus fulgidus (strain ATCC 49558 / DSM 4304 / JCM 9628 / NBRC 100126 / VC-16).